A 144-amino-acid chain; its full sequence is Large ribosomal subunit protein uL16c (144 aa).

It belongs to the universal ribosomal protein uL16 family. Part of the 50S ribosomal subunit.

Its subcellular location is the plastid. The protein localises to the chloroplast. This Chara vulgaris (Common stonewort) protein is Large ribosomal subunit protein uL16c.